A 146-amino-acid polypeptide reads, in one-letter code: uncharacterized protein (146 aa).

This is an uncharacterized protein from Bacillus subtilis (strain 168).